The primary structure comprises 335 residues: MATIHRPRRGSLAFSPRKRAKSEVPRIRSWVADERAGMAGFAGYKAGMTHVIMIDDRPRSLTEGMEISVPVTVVEVPPMSVAALRVYEPYNGGIRPAGELWAENLSQDLERAITIPKARRGASLEDIESRVDELCEIRVLAHTNPRLLTGVPKKVPDIMEIPVTGRSVEEQLKAAEGLLGSQVAVSNIFNVGEWIDVSAVTKGKGTQGPVKRWGIMLQKRKHSRTGKLRHVGNLGPWHPARISWRVPQLGQTGYHQRTEFNKRIMAIGTNGTDITPDGGFVGYGVVRNEYMLIKGSVPGPVKRLVRMRRAIRPGAAFAPKAPQILYVSKESKQGV.

Residues 1–20 (MATIHRPRRGSLAFSPRKRA) are disordered.

This sequence belongs to the universal ribosomal protein uL3 family. Part of the 50S ribosomal subunit. Forms a cluster with proteins L14 and L24e.

Functionally, one of the primary rRNA binding proteins, it binds directly near the 3'-end of the 23S rRNA, where it nucleates assembly of the 50S subunit. The polypeptide is Large ribosomal subunit protein uL3 (Methanothrix thermoacetophila (strain DSM 6194 / JCM 14653 / NBRC 101360 / PT) (Methanosaeta thermophila)).